A 505-amino-acid polypeptide reads, in one-letter code: L-carnitine/gamma-butyrobetaine antiporter (505 aa).

Transmembrane regions (helical) follow at residues 10–30 (IEPKVFFPPLIIVGILCWLTV), 50–70 (IWGWAFEWYMVVMLIGWFWLV), 92–112 (IFMMFASCTSAAVLFWGSIEI), 143–163 (GPLPWATYSFLSVAFAYFFFV), 195–215 (FYLVALIFAMGTSLGLATPLV), 231–251 (LDAIIITCWIILNAICVACGL), 263–283 (SYLSFLMLGWVFIVSGASFIM), 316–336 (WTVFYWAWWVIYAIQMSIFLA), 347–367 (LCFGMVLGLTASTWILWTVLG), 403–423 (LSTATMWGFFILCFIATVTLI), 446–466 (LLVRIGWSVLVGIIGIVLLAL), and 475–495 (AIIAGGCPLFFVNIMVTLSFI).

Belongs to the BCCT transporter (TC 2.A.15) family. CaiT subfamily. In terms of assembly, homotrimer.

It is found in the cell inner membrane. The enzyme catalyses 4-(trimethylamino)butanoate(in) + (R)-carnitine(out) = 4-(trimethylamino)butanoate(out) + (R)-carnitine(in). It participates in amine and polyamine metabolism; carnitine metabolism. Catalyzes the exchange of L-carnitine for gamma-butyrobetaine. In Salmonella arizonae (strain ATCC BAA-731 / CDC346-86 / RSK2980), this protein is L-carnitine/gamma-butyrobetaine antiporter.